A 276-amino-acid chain; its full sequence is Sulfur carrier protein FdhD (276 aa).

Residue cysteine 122 is the Cysteine persulfide intermediate of the active site. 259–264 (FCRRGR) serves as a coordination point for Mo-bis(molybdopterin guanine dinucleotide).

Belongs to the FdhD family.

It is found in the cytoplasm. Functionally, required for formate dehydrogenase (FDH) activity. Acts as a sulfur carrier protein that transfers sulfur from IscS to the molybdenum cofactor prior to its insertion into FDH. This is Sulfur carrier protein FdhD from Proteus mirabilis (strain HI4320).